We begin with the raw amino-acid sequence, 1108 residues long: MAAVMMNGVGPDGAMKPNLDQKLNNHGGDTKAISSSEIVQQQTPARSLQSDNPLRMNDLPDEIVHITENFLSLNQLLSRLAQRSHNELEDTIRSLAKKPLPMPPMLNGNADHNTIEDLSNENLDKKVTLLKFAQEQHAKWVKALVITDWSKKASTLSKLIDLKVHMHTQMEKYDFVLDRMMHNKRNLAYARLPSPDLKTALEVLANGDAPWMPDLGYIPPPEMSPEDQLKWLEDLDTLLSLRLTIDDHDKIPYHFRNYRIGSGRVTFIVKGEFEVDLTIADDDPEKQYWFIDFRFLFRPAPPGLSENLRMYLELKVNEVLGAEGLAGCYKYLHELVLTHKINELRRQAMELSVGRWVDALNVERLNRSLAVQYWTSRYPAKAPNAPKSWIIIGVHSAAPSGGLRATAPTSRLALRWFRDNQEVKDIEIPLDEADLSMERILKDVIGRHTQQILTLMHTGLRNKPRFVNKEDHLVLELSRKQPSESLLTMQLTKLDSMVVRVDQIGGTFAVQPRTRPMPMAESNLNTPGRDPVAVIGWVRNTFAMEELVRRGKSQGWVVGKPPVKPDDLRNILSNREQTDAMAWFRKQGWRPQFYVLAHLSMSGDQWWLIELTTPNSNSAASTAGGIRIRTHVQLQFASKQAIMESPSFFSDLNYFTSAMISKMRDLRELHSRRINHIDQPCIRPGLSSNIRMPTIFIRTSEVLPSLSGKGSLGRWAADEVRLSVANVQSSSSTEVDRRGENRSALSTRMDSRIVIASEARLRVLDKSKFRQLSSRVDRDVAFNHKTGEFVLQLRSELGETMIDKLISRLQTIERLYEFLGSISRAPRGVQCETVTLRRVVFTYSDLPQPVSEELAALQPPTKRWKVVLDFADPRTVKLVLEKNNPHIRAVDMLQTLANSPRGLERLPFYLPTTLAVYRALDSISDAWLQLQVSRKGTFEIFTKNIDLATIRYDLPGPQARRLTLDVKLVSRRGELSWHVKRTDAEPNKSNDEFSRVLKEVWNTKSPNWKSLSTSACGPASAGVEELLKGIDKAVRTLLESPPLVLQQQQQRQPVVQPGQQPQVQNQANGVMNRGPQRPGLPGAGGLGAQMRQKQVPQAPMGNHVVDLT.

Disordered regions lie at residues 1–30 (MAAV…GGDT), 35–54 (SSEI…DNPL), and 1048–1108 (QQQR…VDLT). Residues 35-52 (SSEIVQQQTPARSLQSDN) show a composition bias toward polar residues. Residues 1048-1080 (QQQRQPVVQPGQQPQVQNQANGVMNRGPQRPGL) are compositionally biased toward low complexity.

This sequence belongs to the Mediator complex subunit 14 family. As to quaternary structure, component of the Mediator complex.

It is found in the nucleus. Its function is as follows. Component of the Mediator complex, a coactivator involved in the regulated transcription of nearly all RNA polymerase II-dependent genes. Mediator functions as a bridge to convey information from gene-specific regulatory proteins to the basal RNA polymerase II transcription machinery. Mediator is recruited to promoters by direct interactions with regulatory proteins and serves as a scaffold for the assembly of a functional preinitiation complex with RNA polymerase II and the general transcription factors. The protein is Mediator of RNA polymerase II transcription subunit 14 (RGR1) of Pyricularia oryzae (strain 70-15 / ATCC MYA-4617 / FGSC 8958) (Rice blast fungus).